A 310-amino-acid chain; its full sequence is p-hydroxybenzoic acid efflux pump subunit AaeA (310 aa).

The helical transmembrane segment at 12-32 (AITLVLVILAFIAIFRAWVYY) threads the bilayer.

This sequence belongs to the membrane fusion protein (MFP) (TC 8.A.1) family.

It is found in the cell inner membrane. Its function is as follows. Forms an efflux pump with AaeB. The chain is p-hydroxybenzoic acid efflux pump subunit AaeA from Salmonella gallinarum (strain 287/91 / NCTC 13346).